A 284-amino-acid chain; its full sequence is Adenylate kinase 1, chloroplastic (284 aa).

The N-terminal 36 residues, 1–36 (MARLVRVARSSSLFGFGNRFYSTSAEASHASSPSPF), are a transit peptide targeting the chloroplast. 61–66 (GVGKGT) is an ATP binding site. Residues 81–110 (ATGDLVREELASSGPLSQKLSEIVNQGKLV) form an NMP region. AMP is bound by residues Thr-82, Arg-87, 108-110 (KLV), 138-141 (GFPR), and Gln-145. Residues 174-222 (GRRTCSQCGKGFNVAHINLKGENGRPGISMDPLLPPHQCMSKLVTRADD) form an LID region. Arg-175 serves as a coordination point for ATP. AMP is bound by residues Arg-219 and Arg-230. ATP is bound at residue Gly-258.

It belongs to the adenylate kinase family. Monomer. As to expression, highly expressed in flowers and at lower levels in roots, leaves and stems.

The protein resides in the plastid. The protein localises to the chloroplast stroma. It carries out the reaction AMP + ATP = 2 ADP. Functionally, catalyzes the reversible transfer of the terminal phosphate group between ATP and AMP. Plays an important role in cellular energy homeostasis, adenine nucleotide metabolism and plant growth. The protein is Adenylate kinase 1, chloroplastic (ADK) of Arabidopsis thaliana (Mouse-ear cress).